A 392-amino-acid chain; its full sequence is Y' element ATP-dependent helicase YFL066C (392 aa).

A Helicase ATP-binding domain is found at 1 to 175 (MADTPSVAVQ…LQRIGLTGLA (175 aa)). Position 11 to 18 (11 to 18 (APPGYGKT)) interacts with ATP. One can recognise a Helicase C-terminal domain in the interval 232–381 (KLLLALFEIE…EFYGLESKKG (150 aa)).

The protein belongs to the helicase family. Yeast subtelomeric Y' repeat subfamily.

Functionally, catalyzes DNA unwinding and is involved in telomerase-independent telomere maintenance. The sequence is that of Y' element ATP-dependent helicase YFL066C from Saccharomyces cerevisiae (strain ATCC 204508 / S288c) (Baker's yeast).